A 316-amino-acid chain; its full sequence is Acetaldehyde dehydrogenase (316 aa).

NAD(+) is bound at residue 11–14; the sequence is SGNI. Cysteine 131 (acyl-thioester intermediate) is an active-site residue. NAD(+) contacts are provided by residues 162-170 and asparagine 289; that span reads SAGPGTRAN.

The protein belongs to the acetaldehyde dehydrogenase family. As to quaternary structure, interacts with MhpE.

It carries out the reaction acetaldehyde + NAD(+) + CoA = acetyl-CoA + NADH + H(+). It participates in aromatic compound metabolism; 3-phenylpropanoate degradation. Its function is as follows. Catalyzes the conversion of acetaldehyde to acetyl-CoA, using NAD(+) and coenzyme A. Is the final enzyme in the meta-cleavage pathway for the degradation of aromatic compounds. The protein is Acetaldehyde dehydrogenase of Klebsiella pneumoniae subsp. pneumoniae (strain ATCC 700721 / MGH 78578).